We begin with the raw amino-acid sequence, 959 residues long: rDNA transcriptional regulator pol5 (959 aa).

Serine 742 and serine 743 each carry phosphoserine. Positions 936-959 are disordered; that stretch reads HQQTSTAASSPQKTGHHENEKTNH. The span at 937–948 shows a compositional bias: polar residues; it reads QQTSTAASSPQK. Residues 950–959 are compositionally biased toward basic and acidic residues; it reads GHHENEKTNH.

It belongs to the MYBBP1A family. In terms of assembly, interacts with cdc10.

The protein resides in the nucleus. In terms of biological role, plays an important role in the regulation of rRNA transcription. Binds to rDNA promoter fragments. This is rDNA transcriptional regulator pol5 (pol5) from Schizosaccharomyces pombe (strain 972 / ATCC 24843) (Fission yeast).